The primary structure comprises 190 residues: MYVAMIIRKYFLIIALLLMPWLAIPSVSAADKGGFNTFTDNVAETWRQPEHYDLYVPAITWHARFAYDKEKTDRYNERPWGVGFGQSRWDDKGNWHGLYMMAFKDSFNKWEPIGGYGWEKTWRPLEDDNFRLGLGFTAGVTARDNWNYIPIPVLLPLASIGYGPATFQMTYIPGSYNNGNVYFAWMRFQF.

Residues 1–29 form the signal peptide; that stretch reads MYVAMIIRKYFLIIALLLMPWLAIPSVSA. Catalysis depends on residues H62, D105, and S106.

The protein belongs to the lipid A palmitoyltransferase family. Homodimer.

It is found in the cell outer membrane. The enzyme catalyses a lipid A + a 1,2-diacyl-sn-glycero-3-phosphocholine = a hepta-acyl lipid A + a 2-acyl-sn-glycero-3-phosphocholine. It carries out the reaction a lipid IVA + a 1,2-diacyl-sn-glycero-3-phosphocholine = a lipid IVB + a 2-acyl-sn-glycero-3-phosphocholine. It catalyses the reaction a lipid IIA + a 1,2-diacyl-sn-glycero-3-phosphocholine = a lipid IIB + a 2-acyl-sn-glycero-3-phosphocholine. Functionally, transfers a fatty acid residue from the sn-1 position of a phospholipid to the N-linked hydroxyfatty acid chain on the proximal unit of lipid A or its precursors. Required for resistance to cationic antimicrobial peptides (CAMPs). Modifications of lipid A with an acyl chain allow to evade host immune defenses by resisting antimicrobial peptides and attenuating the inflammatory response to infection triggered by lipopolysaccharide through the Toll-like receptor 4 (TLR4) signal transduction pathway. This is Lipid A acyltransferase PagP from Salmonella typhimurium (strain LT2 / SGSC1412 / ATCC 700720).